A 277-amino-acid polypeptide reads, in one-letter code: Carbonyl reductase [NADPH] 3 (277 aa).

S2 is subject to N-acetylserine. Residues 10–34 (VTGA…GDVV), 38–42 (RDEAR), 63–64 (DI), and N90 each bind NADP(+). S30 is subject to Phosphoserine. Substrate is bound at residue S140. The Proton acceptor role is filled by Y194. 194-198 (YGVSK) serves as a coordination point for NADP(+).

This sequence belongs to the short-chain dehydrogenases/reductases (SDR) family.

It is found in the cytoplasm. It catalyses the reaction a secondary alcohol + NADP(+) = a ketone + NADPH + H(+). It carries out the reaction a quinone + NADPH + H(+) = a quinol + NADP(+). Functionally, catalyzes the NADPH-dependent reduction of carbonyl compounds to their corresponding alcohols. Has low NADPH-dependent oxidoreductase activity. Acts on several orthoquinones, as well as on non-quinone compounds, such as isatin or on the anticancer drug oracin. Best substrates for CBR3 is 1,2- naphthoquinone, hence could play a role in protection against cytotoxicity of exogenous quinones. Exerts activity toward ortho-quinones but not paraquinones. No endogenous substrate for CBR3 except isatin has been identified. The chain is Carbonyl reductase [NADPH] 3 (Cbr3) from Mus musculus (Mouse).